Reading from the N-terminus, the 412-residue chain is Serine hydroxymethyltransferase (412 aa).

(6S)-5,6,7,8-tetrahydrofolate is bound by residues Leu-120 and 124–126 (GHL). Lys-229 carries the post-translational modification N6-(pyridoxal phosphate)lysine. A (6S)-5,6,7,8-tetrahydrofolate-binding site is contributed by 352–354 (SPF).

Belongs to the SHMT family. As to quaternary structure, homodimer. Pyridoxal 5'-phosphate serves as cofactor.

The protein resides in the cytoplasm. It carries out the reaction (6R)-5,10-methylene-5,6,7,8-tetrahydrofolate + glycine + H2O = (6S)-5,6,7,8-tetrahydrofolate + L-serine. It participates in one-carbon metabolism; tetrahydrofolate interconversion. The protein operates within amino-acid biosynthesis; glycine biosynthesis; glycine from L-serine: step 1/1. Catalyzes the reversible interconversion of serine and glycine with tetrahydrofolate (THF) serving as the one-carbon carrier. This reaction serves as the major source of one-carbon groups required for the biosynthesis of purines, thymidylate, methionine, and other important biomolecules. Also exhibits THF-independent aldolase activity toward beta-hydroxyamino acids, producing glycine and aldehydes, via a retro-aldol mechanism. The sequence is that of Serine hydroxymethyltransferase from Ruminiclostridium cellulolyticum (strain ATCC 35319 / DSM 5812 / JCM 6584 / H10) (Clostridium cellulolyticum).